The chain runs to 407 residues: Arginine deiminase (407 aa).

Cysteine 397 serves as the catalytic Amidino-cysteine intermediate.

It belongs to the arginine deiminase family.

It is found in the cytoplasm. It catalyses the reaction L-arginine + H2O = L-citrulline + NH4(+). Its pathway is amino-acid degradation; L-arginine degradation via ADI pathway; carbamoyl phosphate from L-arginine: step 1/2. This is Arginine deiminase from Vibrio parahaemolyticus serotype O3:K6 (strain RIMD 2210633).